Consider the following 489-residue polypeptide: Beta-1,3-glucosyltransferase (489 aa).

M1 is a topological domain (cytoplasmic). Residues 2–22 form a helical; Signal-anchor for type II membrane protein membrane-spanning segment; sequence RPPALLALFSCSAAFALMSEE. Topologically, residues 23-489 are lumenal; it reads IKEKVTPSQD…ETQKDPREEL (467 aa). N-linked (GlcNAc...) asparagine glycosylation occurs at N78. A Prevents secretion from ER motif is present at residues 486-489; sequence REEL.

The protein belongs to the glycosyltransferase 31 family.

Its subcellular location is the endoplasmic reticulum membrane. It participates in protein modification; protein glycosylation. Functionally, O-glucosyltransferase that transfers glucose toward fucose with a beta-1,3 linkage. Specifically glucosylates O-linked fucosylglycan on TSP type-1 domains of proteins, thereby contributing to elongation of O-fucosylglycan. The protein is Beta-1,3-glucosyltransferase of Mus musculus (Mouse).